Consider the following 401-residue polypeptide: Argininosuccinate synthase (401 aa).

8–16 (AYSGGLDTS) is an ATP binding site. An L-citrulline-binding site is contributed by Tyr-85. Gly-115 contributes to the ATP binding site. L-aspartate is bound by residues Thr-117, Asn-121, and Asp-122. Asn-121 is a binding site for L-citrulline. Arg-125, Ser-173, Glu-258, and Tyr-270 together coordinate L-citrulline.

Belongs to the argininosuccinate synthase family. Type 1 subfamily. As to quaternary structure, homotetramer.

The protein resides in the cytoplasm. The catalysed reaction is L-citrulline + L-aspartate + ATP = 2-(N(omega)-L-arginino)succinate + AMP + diphosphate + H(+). The protein operates within amino-acid biosynthesis; L-arginine biosynthesis; L-arginine from L-ornithine and carbamoyl phosphate: step 2/3. The sequence is that of Argininosuccinate synthase from Staphylococcus aureus (strain Mu3 / ATCC 700698).